Consider the following 125-residue polypeptide: uncharacterized protein (125 aa).

This is an uncharacterized protein from Escherichia coli (strain K12).